The chain runs to 310 residues: Small ribosomal subunit biogenesis GTPase RsgA (310 aa).

Residues 77–238 enclose the CP-type G domain; that stretch reads LSKQSHILAA…IIDTPGIKGF (162 aa). Residues 126–129 and 180–188 contribute to the GTP site; these read NKVD and GHSGVGKST. C262, C267, H269, and C275 together coordinate Zn(2+).

Belongs to the TRAFAC class YlqF/YawG GTPase family. RsgA subfamily. Monomer. Associates with 30S ribosomal subunit, binds 16S rRNA. The cofactor is Zn(2+).

The protein localises to the cytoplasm. In terms of biological role, one of several proteins that assist in the late maturation steps of the functional core of the 30S ribosomal subunit. Helps release RbfA from mature subunits. May play a role in the assembly of ribosomal proteins into the subunit. Circularly permuted GTPase that catalyzes slow GTP hydrolysis, GTPase activity is stimulated by the 30S ribosomal subunit. This is Small ribosomal subunit biogenesis GTPase RsgA from Bacteroides fragilis (strain ATCC 25285 / DSM 2151 / CCUG 4856 / JCM 11019 / LMG 10263 / NCTC 9343 / Onslow / VPI 2553 / EN-2).